Reading from the N-terminus, the 329-residue chain is Neuropeptides B/W receptor type 1 (329 aa).

Residues 1–43 (MHNLTLFESGGDNVSCGGSSLGCPNGSSLAPLPLPQPLAVAVP) are Extracellular-facing. 3 N-linked (GlcNAc...) asparagine glycosylation sites follow: N3, N13, and N25. The chain crosses the membrane as a helical span at residues 44–64 (VVYGVICAVGLAGNSAVLYVL). Topologically, residues 65 to 75 (LRTPRMKTVTN) are cytoplasmic. The helical transmembrane segment at 76–96 (VFILNLAIADELFTLVLPINI) threads the bilayer. Residues 97–112 (ADFLLRRWPFGEVMCK) lie on the Extracellular side of the membrane. A disulfide bridge connects residues C111 and C190. The helical transmembrane segment at 113 to 133 (LIVAVDQYNTFSSLYFLAVMS) threads the bilayer. Residues 134–158 (ADRYLVVLATAESRRVSGRTYGAAR) lie on the Cytoplasmic side of the membrane. The helical transmembrane segment at 159–179 (AVSLAVWALVTLVVLPFAVFA) threads the bilayer. The Extracellular segment spans residues 180 to 209 (RLDEEQGRRQCVLVFPQPEAFWWRASRLYT). A helical transmembrane segment spans residues 210–230 (LVLGFAIPVTTICALYTTLLC). Over 231–250 (RLRAIQLDSHAKALDRAKKR) the chain is Cytoplasmic. The chain crosses the membrane as a helical span at residues 251–271 (VTLLVAAILAVCLLCWTPYHL). Residues 272–289 (STIVALTTDLPQTPLVIG) lie on the Extracellular side of the membrane. The helical transmembrane segment at 290–312 (ISYFITSLSYANSCLNPFLYAFL) threads the bilayer. Residues 313-329 (DDSFRRSLRQLVSCRSA) lie on the Cytoplasmic side of the membrane.

The protein belongs to the G-protein coupled receptor 1 family.

The protein resides in the cell membrane. In terms of biological role, interacts specifically with a number of opioid ligands. Receptor for neuropeptides B and W, which may be involved in neuroendocrine system regulation, food intake and the organization of other signals. The chain is Neuropeptides B/W receptor type 1 (Npbwr1) from Mus musculus (Mouse).